A 197-amino-acid chain; its full sequence is Beta-crystallin A2 (197 aa).

Residues 1-11 (MSSAPAQGPAP) form an N-terminal arm region. 2 consecutive Beta/gamma crystallin 'Greek key' domains span residues 12 to 52 (ASLT…KVEN) and 53 to 99 (GAWV…RPVL). The tract at residues 100–105 (CANHSD) is connecting peptide. Beta/gamma crystallin 'Greek key' domains lie at 106–147 (SRVT…KVSS) and 148–196 (GAWV…RRVQ).

Belongs to the beta/gamma-crystallin family. In terms of assembly, homo/heterodimer, or complexes of higher-order. The structure of beta-crystallin oligomers seems to be stabilized through interactions between the N-terminal arms.

Functionally, crystallins are the dominant structural components of the vertebrate eye lens. The protein is Beta-crystallin A2 (CRYBA2) of Bos taurus (Bovine).